Consider the following 321-residue polypeptide: uncharacterized protein (321 aa).

Topologically, residues M1–K6 are extracellular. A helical transmembrane segment spans residues I7 to F29. At P30 to T34 the chain is on the cytoplasmic side. The chain crosses the membrane as a helical span at residues W35–A57. Topologically, residues D58–Q69 are extracellular. A helical transmembrane segment spans residues V70–L92. Residues H93–E97 lie on the Cytoplasmic side of the membrane. A helical transmembrane segment spans residues I98–L120. Residues A121–V129 lie on the Extracellular side of the membrane. The chain crosses the membrane as a helical span at residues A130–F150. Over A151–P159 the chain is Cytoplasmic. A helical transmembrane segment spans residues G160–V180. Over K181–K190 the chain is Extracellular. The helical transmembrane segment at A191 to V211 threads the bilayer. Topologically, residues S212–S221 are cytoplasmic. Residues G222–L242 traverse the membrane as a helical segment. Residues C243 to G267 lie on the Extracellular side of the membrane. A helical membrane pass occupies residues L268 to F288. The Cytoplasmic portion of the chain corresponds to S289–L321.

The protein belongs to the bile acid:sodium symporter (BASS) (TC 2.A.28) family.

It localises to the cell membrane. This is an uncharacterized protein from Bacillus subtilis (strain 168).